The primary structure comprises 348 residues: Phosphate acyltransferase (348 aa).

It belongs to the PlsX family. As to quaternary structure, homodimer. Probably interacts with PlsY.

The protein localises to the cytoplasm. The catalysed reaction is a fatty acyl-[ACP] + phosphate = an acyl phosphate + holo-[ACP]. It participates in lipid metabolism; phospholipid metabolism. In terms of biological role, catalyzes the reversible formation of acyl-phosphate (acyl-PO(4)) from acyl-[acyl-carrier-protein] (acyl-ACP). This enzyme utilizes acyl-ACP as fatty acyl donor, but not acyl-CoA. The protein is Phosphate acyltransferase of Leuconostoc citreum (strain KM20).